The chain runs to 439 residues: ATP-dependent protease ATPase subunit HslU (439 aa).

Residues Ile-17, Gly-59–Glu-64, Asp-251, Glu-317, and Arg-389 contribute to the ATP site.

This sequence belongs to the ClpX chaperone family. HslU subfamily. As to quaternary structure, a double ring-shaped homohexamer of HslV is capped on each side by a ring-shaped HslU homohexamer. The assembly of the HslU/HslV complex is dependent on binding of ATP.

The protein localises to the cytoplasm. ATPase subunit of a proteasome-like degradation complex; this subunit has chaperone activity. The binding of ATP and its subsequent hydrolysis by HslU are essential for unfolding of protein substrates subsequently hydrolyzed by HslV. HslU recognizes the N-terminal part of its protein substrates and unfolds these before they are guided to HslV for hydrolysis. This chain is ATP-dependent protease ATPase subunit HslU, found in Campylobacter jejuni subsp. jejuni serotype O:23/36 (strain 81-176).